We begin with the raw amino-acid sequence, 341 residues long: tRNA N6-adenosine threonylcarbamoyltransferase (341 aa).

Fe cation contacts are provided by H111 and H115. Substrate contacts are provided by residues 134 to 138, D167, G180, and N276; that span reads LVSGG. D304 provides a ligand contact to Fe cation.

This sequence belongs to the KAE1 / TsaD family. The cofactor is Fe(2+).

It is found in the cytoplasm. It carries out the reaction L-threonylcarbamoyladenylate + adenosine(37) in tRNA = N(6)-L-threonylcarbamoyladenosine(37) in tRNA + AMP + H(+). Required for the formation of a threonylcarbamoyl group on adenosine at position 37 (t(6)A37) in tRNAs that read codons beginning with adenine. Is involved in the transfer of the threonylcarbamoyl moiety of threonylcarbamoyl-AMP (TC-AMP) to the N6 group of A37, together with TsaE and TsaB. TsaD likely plays a direct catalytic role in this reaction. This Pseudomonas aeruginosa (strain UCBPP-PA14) protein is tRNA N6-adenosine threonylcarbamoyltransferase.